The following is a 1886-amino-acid chain: Nuclear pore membrane glycoprotein 210 (1886 aa).

The first 26 residues, Met1 to Ala26, serve as a signal peptide directing secretion. Over Lys27–Gln1808 the chain is Perinuclear space. 12 N-linked (GlcNAc...) asparagine glycosylation sites follow: Asn44, Asn337, Asn405, Asn484, Asn681, Asn801, Asn926, Asn1039, Asn1116, Asn1135, Asn1362, and Asn1441. Positions Phe1078–Lys1151 constitute a BIG2 domain. Residues Val1809–His1829 traverse the membrane as a helical segment. Residues Thr1830–His1886 lie on the Cytoplasmic side of the membrane. Position 1839 is a phosphoserine (Ser1839). Position 1844 is a phosphothreonine (Thr1844). A phosphoserine mark is found at Ser1873, Ser1876, Ser1880, and Ser1885.

It belongs to the NUP210 family. As to quaternary structure, forms dimers and possibly higher-order oligomers. N-glycosylated, but not all potential glycosylation sites may be used. Contains high-mannose type oligosaccharides. In terms of processing, phosphorylated at Ser-1880 in mitosis specifically; not phosphorylated in interphase.

Its subcellular location is the nucleus. It localises to the nuclear pore complex. The protein resides in the nucleus membrane. It is found in the endoplasmic reticulum membrane. Functionally, nucleoporin essential for nuclear pore assembly and fusion, nuclear pore spacing, as well as structural integrity. The chain is Nuclear pore membrane glycoprotein 210 (Nup210) from Mus musculus (Mouse).